Consider the following 247-residue polypeptide: ATP synthase subunit a, chloroplastic (247 aa).

The next 5 helical transmembrane spans lie at Gln-38–Val-58, Val-95–Leu-115, Ile-134–Ser-154, Leu-199–Leu-219, and Gly-220–Gly-240.

This sequence belongs to the ATPase A chain family. In terms of assembly, F-type ATPases have 2 components, CF(1) - the catalytic core - and CF(0) - the membrane proton channel. CF(1) has five subunits: alpha(3), beta(3), gamma(1), delta(1), epsilon(1). CF(0) has four main subunits: a, b, b' and c.

The protein localises to the plastid. It localises to the chloroplast thylakoid membrane. Key component of the proton channel; it plays a direct role in the translocation of protons across the membrane. The chain is ATP synthase subunit a, chloroplastic from Pisum sativum (Garden pea).